Here is a 700-residue protein sequence, read N- to C-terminus: DNA ligase (700 aa).

NAD(+)-binding positions include 42-46 (DDEYD), 91-92 (SL), and Glu-126. The active-site N6-AMP-lysine intermediate is Lys-128. NAD(+) is bound by residues Arg-149, Glu-184, Lys-300, and Lys-324. The Zn(2+) site is built by Cys-418, Cys-421, Cys-436, and Cys-441. Residues 598 to 686 (TRTDQLSGLN…GLGERGVAED (89 aa)) form the BRCT domain.

It belongs to the NAD-dependent DNA ligase family. LigA subfamily. It depends on Mn(2+) as a cofactor.

The catalysed reaction is NAD(+) + (deoxyribonucleotide)n-3'-hydroxyl + 5'-phospho-(deoxyribonucleotide)m = (deoxyribonucleotide)n+m + AMP + beta-nicotinamide D-nucleotide.. Functionally, DNA ligase that catalyzes the formation of phosphodiester linkages between 5'-phosphoryl and 3'-hydroxyl groups in double-stranded DNA using NAD as a coenzyme and as the energy source for the reaction. It is essential for DNA replication and repair of damaged DNA. The protein is DNA ligase of Deinococcus radiodurans (strain ATCC 13939 / DSM 20539 / JCM 16871 / CCUG 27074 / LMG 4051 / NBRC 15346 / NCIMB 9279 / VKM B-1422 / R1).